The following is a 621-amino-acid chain: uncharacterized protein (621 aa).

It is found in the plastid. It localises to the chloroplast. This is an uncharacterized protein from Porphyra purpurea (Red seaweed).